We begin with the raw amino-acid sequence, 376 residues long: Succinyl-diaminopimelate desuccinylase (376 aa).

H67 is a Zn(2+) binding site. Residue D69 is part of the active site. D100 contacts Zn(2+). E134 functions as the Proton acceptor in the catalytic mechanism. Positions 135, 163, and 349 each coordinate Zn(2+).

This sequence belongs to the peptidase M20A family. DapE subfamily. As to quaternary structure, homodimer. Zn(2+) serves as cofactor. Requires Co(2+) as cofactor.

It catalyses the reaction N-succinyl-(2S,6S)-2,6-diaminopimelate + H2O = (2S,6S)-2,6-diaminopimelate + succinate. It functions in the pathway amino-acid biosynthesis; L-lysine biosynthesis via DAP pathway; LL-2,6-diaminopimelate from (S)-tetrahydrodipicolinate (succinylase route): step 3/3. Its function is as follows. Catalyzes the hydrolysis of N-succinyl-L,L-diaminopimelic acid (SDAP), forming succinate and LL-2,6-diaminopimelate (DAP), an intermediate involved in the bacterial biosynthesis of lysine and meso-diaminopimelic acid, an essential component of bacterial cell walls. The chain is Succinyl-diaminopimelate desuccinylase from Shewanella woodyi (strain ATCC 51908 / MS32).